Reading from the N-terminus, the 96-residue chain is Alpha-elapitoxin-Al2b (96 aa).

A signal peptide spans 1–21; that stretch reads MKTLLLTLVVVTIVCLDFGGG. Intrachain disulfides connect Cys-24–Cys-41, Cys-34–Cys-62, Cys-47–Cys-51, Cys-66–Cys-77, and Cys-78–Cys-83.

The protein belongs to the three-finger toxin family. Long-chain subfamily. Type II alpha-neurotoxin sub-subfamily. Expressed by the venom gland.

The protein localises to the secreted. Its function is as follows. Potent long-chain postsynaptic neurotoxin. Pseudo-irreversibly inhibits the nicotinic acetylcholine receptor through competitive antagonism. The sequence is that of Alpha-elapitoxin-Al2b from Austrelaps labialis (Pygmy copperhead).